Reading from the N-terminus, the 200-residue chain is Dephospho-CoA kinase (200 aa).

Positions 3 to 200 (VLGLTGSIGM…LSGKPAAATR (198 aa)) constitute a DPCK domain. 11–16 (GMGKTT) serves as a coordination point for ATP.

Belongs to the CoaE family.

The protein resides in the cytoplasm. The catalysed reaction is 3'-dephospho-CoA + ATP = ADP + CoA + H(+). It functions in the pathway cofactor biosynthesis; coenzyme A biosynthesis; CoA from (R)-pantothenate: step 5/5. Its function is as follows. Catalyzes the phosphorylation of the 3'-hydroxyl group of dephosphocoenzyme A to form coenzyme A. The protein is Dephospho-CoA kinase of Brucella melitensis biotype 1 (strain ATCC 23456 / CCUG 17765 / NCTC 10094 / 16M).